The sequence spans 233 residues: Large ribosomal subunit protein uL1 (233 aa).

The protein belongs to the universal ribosomal protein uL1 family. As to quaternary structure, part of the 50S ribosomal subunit.

Binds directly to 23S rRNA. The L1 stalk is quite mobile in the ribosome, and is involved in E site tRNA release. Its function is as follows. Protein L1 is also a translational repressor protein, it controls the translation of the L11 operon by binding to its mRNA. In Shewanella pealeana (strain ATCC 700345 / ANG-SQ1), this protein is Large ribosomal subunit protein uL1.